The primary structure comprises 219 residues: Transmembrane protein 17A (219 aa).

2 N-linked (GlcNAc...) asparagine glycosylation sites follow: asparagine 18 and asparagine 27. 4 helical membrane passes run methionine 56–leucine 76, leucine 83–valine 103, leucine 121–threonine 141, and alanine 153–leucine 173.

This sequence belongs to the TMEM17 family. Part of the tectonic-like complex (also named B9 complex).

It localises to the cell projection. It is found in the cilium membrane. In terms of biological role, transmembrane component of the tectonic-like complex, a complex localized at the transition zone of primary cilia and acting as a barrier that prevents diffusion of transmembrane proteins between the cilia and plasma membranes. Required for ciliogenesis and sonic hedgehog/SHH signaling. This Danio rerio (Zebrafish) protein is Transmembrane protein 17A (tmem17a).